The chain runs to 552 residues: Glutamine--tRNA ligase (552 aa).

Positions 34–44 (PEPNGYLHIGH) match the 'HIGH' region motif. Residues 35–37 (EPN) and 41–47 (HIGHAKS) each bind ATP. 2 residues coordinate L-glutamine: Asp-67 and Tyr-212. ATP-binding positions include Thr-231, 261–262 (RL), and 269–271 (MSK). Positions 268–272 (VMSKR) match the 'KMSKS' region motif.

Belongs to the class-I aminoacyl-tRNA synthetase family. Monomer.

It localises to the cytoplasm. It catalyses the reaction tRNA(Gln) + L-glutamine + ATP = L-glutaminyl-tRNA(Gln) + AMP + diphosphate. This chain is Glutamine--tRNA ligase, found in Aliivibrio fischeri (strain MJ11) (Vibrio fischeri).